A 138-amino-acid chain; its full sequence is Transposon Tn10 TetD protein (138 aa).

The HTH araC/xylS-type domain maps to 31-129 (KDVLLWIEHN…KVTPSYYRRN (99 aa)). 2 consecutive DNA-binding regions (H-T-H motif) follow at residues 48–69 (DDVANKAGYTKWYFQRLFKKVT) and 96–119 (ILEIALKYQFDSQQSFTRRFKYIF).

This Escherichia coli protein is Transposon Tn10 TetD protein (tetD).